A 51-amino-acid polypeptide reads, in one-letter code: Putative antitoxin VapB6 (51 aa).

In terms of biological role, antitoxin component of a possible type II toxin-antitoxin (TA) system. The cognate toxin is VapC6. In Mycobacterium tuberculosis (strain CDC 1551 / Oshkosh), this protein is Putative antitoxin VapB6 (vapB6).